Here is a 277-residue protein sequence, read N- to C-terminus: Small ribosomal subunit protein uS3 (277 aa).

Residues 43 to 111 (IRELMSKGMD…QIQLNILEVK (69 aa)) form the KH type-2 domain. Residues 217-277 (AAQQAAAPSS…AEANNAEGGK (61 aa)) form a disordered region. The span at 245–258 (NDRNDRGGRRERDS) shows a compositional bias: basic and acidic residues. Residues 259-277 (AAAPQQNSAAEANNAEGGK) are compositionally biased toward low complexity.

This sequence belongs to the universal ribosomal protein uS3 family. Part of the 30S ribosomal subunit. Forms a tight complex with proteins S10 and S14.

Binds the lower part of the 30S subunit head. Binds mRNA in the 70S ribosome, positioning it for translation. The chain is Small ribosomal subunit protein uS3 from Kocuria rhizophila (strain ATCC 9341 / DSM 348 / NBRC 103217 / DC2201).